The primary structure comprises 593 residues: Trehalose synthase/amylase TreS (593 aa).

Residue Asp90 participates in substrate binding. Asn132 contributes to the Ca(2+) binding site. Residues His133 and Gln198 each contribute to the substrate site. Asp200 contacts Ca(2+). Arg228 serves as a coordination point for substrate. Catalysis depends on Asp230, which acts as the Nucleophile. The Ca(2+) site is built by Tyr234, Leu235, and Glu237. Glu272 acts as the Proton donor in catalysis. Substrate-binding residues include His341 and Asp342.

The protein belongs to the glycosyl hydrolase 13 family. TreS subfamily. As to quaternary structure, homohexamer.

The enzyme catalyses D-maltose = alpha,alpha-trehalose. It carries out the reaction Endohydrolysis of (1-&gt;4)-alpha-D-glucosidic linkages in polysaccharides containing three or more (1-&gt;4)-alpha-linked D-glucose units.. It participates in glycan biosynthesis; glycogen biosynthesis. With respect to regulation, the amylase activity is stimulated by addition of Ca(2+), but this cation and other divalent cations inhibit the trehalose synthase activity. In addition, trehalose synthase activity, but not amylase activity, is strongly inhibited, and in a competitive manner, by validoxylamine. On the other hand, amylase, but not trehalose synthase activity, is inhibited by the known transition-state amylase inhibitor, acarbose, suggesting the possibility of two different active sites. Other metal ions such as Mg(2+), Mn(2+), and Co(2+) are also somewhat effective in the stimulation of amylase activity, but Hg(2+), Cu(2+), Ni(2+) and Zn(2+) are inhibitory. Catalyzes the reversible interconversion of maltose and trehalose by transglucosylation. Maltose is the preferred substrate. To a lesser extent, also displays amylase activity, catalyzing the endohydrolysis of (1-&gt;4)-alpha-D-glucosidic linkages in glycogen and maltooligosaccharides such as maltoheptaose, to produce maltose which then can be converted to trehalose. TreS plays a key role in the utilization of trehalose for the production of glycogen and alpha-glucan via the TreS-Pep2 branch involved in the biosynthesis of maltose-1-phosphate (M1P). Might also function as a sensor and/or regulator of trehalose levels within the cell. Thus, when trehalose levels in the cell become dangerously low, TreS can expedite the conversion of glycogen to maltose via its amylase activity and then convert the maltose to trehalose; but this enzyme also can expedite or promote the conversion of trehalose to glycogen when cytoplasmic trehalose levels become too high. Is also able to catalyze the hydrolytic cleavage of alpha-aryl glucosides, as well as alpha-glucosyl fluoride in vitro. The chain is Trehalose synthase/amylase TreS from Mycolicibacterium smegmatis (strain ATCC 700084 / mc(2)155) (Mycobacterium smegmatis).